Reading from the N-terminus, the 67-residue chain is MARITVEDCLLQIPNRFQLVLAATYRARMLSQGHAPKIESKNKPAVTALREIAEGKIGLEMLKKVPG.

This sequence belongs to the RNA polymerase subunit omega family. In terms of assembly, the RNAP catalytic core consists of 2 alpha, 1 beta, 1 beta' and 1 omega subunit. When a sigma factor is associated with the core the holoenzyme is formed, which can initiate transcription.

The catalysed reaction is RNA(n) + a ribonucleoside 5'-triphosphate = RNA(n+1) + diphosphate. Its function is as follows. Promotes RNA polymerase assembly. Latches the N- and C-terminal regions of the beta' subunit thereby facilitating its interaction with the beta and alpha subunits. The polypeptide is DNA-directed RNA polymerase subunit omega (Variovorax paradoxus (strain S110)).